The chain runs to 413 residues: MARKTKPLTDTEIKAAKPKDADYQLYDGDGLTLLIKSSGSKLWQFRYYRPLTKQRTKQSFGAYPAVSLSDARKLRAESKVLLAKDIDPQEHQKEQVRNSQEAKTNTFLLVAERWWNVKKTSVTEDYADDIWRSLERDIFPAIGDISITEIKAHTLVKAVQPVQARGALETVRRLCQRINEVMIYAQNTGLIDAVPSVNIGKAFEKPQKKNMPSIRPDQLPQLMHTMRTASISMSTRCLFMWQLLTITRPAEAAEARWDEIDFNASEWKIPAARMKMNRDHTVPLSDGALAILEMMKPLSGGREFIFPSRIKPNQPMNSQTVNAALKRAGLGGVLVSHGLRSIASTALNEEGFPPDVIEAALAHVDKNEVRRAYNRSDYLEQRRPMMQWWADLVKAADSGSIVLTHLSKIRLVG.

The Core-binding (CB) domain occupies 105 to 186; the sequence is NTFLLVAERW…RINEVMIYAQ (82 aa). The region spanning 209 to 386 is the Tyr recombinase domain; it reads KNMPSIRPDQ…DYLEQRRPMM (178 aa). Active-site residues include Arg248, Lys275, His337, Arg340, and His363. Residue Tyr373 is the O-(3'-phospho-DNA)-tyrosine intermediate of the active site.

It belongs to the 'phage' integrase family.

Its function is as follows. Integrase is necessary for integration of the phage into the host genome by site-specific recombination. In conjunction with excisionase, integrase is also necessary for excision of the prophage from the host genome. Part of the cryptic P4-like prophage CP4-57, it excises the prophage when overexpressed, which also requires integration host factor (encoded by ihfA and ihfB). Overexpression of AlpA leads to excision of the CP4-57 prophage, which inactivates ssrA (the gene upstream of the prophage) that encodes tmRNA which is required to rescue stalled ribosomes in a process known as trans-translation. This is Prophage integrase IntA (intA) from Escherichia coli (strain K12).